A 427-amino-acid chain; its full sequence is 3-phosphoshikimate 1-carboxyvinyltransferase (427 aa).

Positions 22, 23, and 27 each coordinate 3-phosphoshikimate. Lys22 is a phosphoenolpyruvate binding site. Phosphoenolpyruvate is bound by residues Gly96 and Arg124. 3-phosphoshikimate contacts are provided by Ser169, Ser170, Gln171, Ser197, Asp313, Asn336, and Lys340. A phosphoenolpyruvate-binding site is contributed by Gln171. Catalysis depends on Asp313, which acts as the Proton acceptor. The phosphoenolpyruvate site is built by Arg344, Arg386, and Lys411.

The protein belongs to the EPSP synthase family. In terms of assembly, monomer.

The protein localises to the cytoplasm. The catalysed reaction is 3-phosphoshikimate + phosphoenolpyruvate = 5-O-(1-carboxyvinyl)-3-phosphoshikimate + phosphate. Its pathway is metabolic intermediate biosynthesis; chorismate biosynthesis; chorismate from D-erythrose 4-phosphate and phosphoenolpyruvate: step 6/7. Its function is as follows. Catalyzes the transfer of the enolpyruvyl moiety of phosphoenolpyruvate (PEP) to the 5-hydroxyl of shikimate-3-phosphate (S3P) to produce enolpyruvyl shikimate-3-phosphate and inorganic phosphate. In Klebsiella pneumoniae subsp. pneumoniae (strain ATCC 700721 / MGH 78578), this protein is 3-phosphoshikimate 1-carboxyvinyltransferase.